A 284-amino-acid polypeptide reads, in one-letter code: uncharacterized protein (284 aa).

Residues 9 to 28 (IILRWVVTLYIYGFILYQIT) form a helical membrane-spanning segment.

The protein resides in the membrane. This is an uncharacterized protein from Aquifex aeolicus (strain VF5).